The sequence spans 373 residues: 3-isopropylmalate dehydrogenase (373 aa).

Position 82–93 (82–93) interacts with NAD(+); the sequence is GPKWGTGALRPE. Arginine 100, arginine 110, arginine 139, and aspartate 231 together coordinate substrate. Mg(2+)-binding residues include aspartate 231, aspartate 256, and aspartate 260. 295-306 lines the NAD(+) pocket; sequence GSAPDLPANKVN.

It belongs to the isocitrate and isopropylmalate dehydrogenases family. Homodimer. Requires Mg(2+) as cofactor. Mn(2+) is required as a cofactor.

Its subcellular location is the cytoplasm. It catalyses the reaction (2R,3S)-3-isopropylmalate + NAD(+) = 4-methyl-2-oxopentanoate + CO2 + NADH. It participates in amino-acid biosynthesis; L-leucine biosynthesis; L-leucine from 3-methyl-2-oxobutanoate: step 3/4. Functionally, catalyzes the oxidation of 3-carboxy-2-hydroxy-4-methylpentanoate (3-isopropylmalate) to 3-carboxy-4-methyl-2-oxopentanoate. The product decarboxylates to 4-methyl-2 oxopentanoate. The polypeptide is 3-isopropylmalate dehydrogenase (LEU2) (Candida maltosa (Yeast)).